The chain runs to 351 residues: MKMKMMVRIYFVSLSLLLFHSYAIDIENEITEFFNKMRDTLPAKDSKWLNPVCMFGGTMNDMAALGEPFSAKCPPIEDSLLSHRYKDYVVKWERLEKNRRRQVSNKRVKHGDLWIANYTSKFSNRRYLCTVTTKNGDCVQGVVRSHVWKPSSCIPKTYELGTYDKYGIDLYCGILYANHYNNITWYKDNKEINIDDFKYSQAGKELIIHNPELEDSGRYDCYVHYDDVRIKNDIVVSRCKILTVIPSQDHRFKLILDPKINVTIGEPANITCSAVSTSLFVDDVLIEWENPSGWIIGLDFGVYSILTSRGGITEATLYFENVTEEYIGNTYTCRGHNYYFDKTLTTTVVLE.

The N-terminal stretch at 1-23 (MKMKMMVRIYFVSLSLLLFHSYA) is a signal peptide. Ig-like C2-type domains lie at 65–137 (LGEP…KNGD) and 155–237 (PKTY…IVVS). 2 cysteine pairs are disulfide-bonded: Cys-73–Cys-129 and Cys-172–Cys-221. N-linked (GlcNAc...) asparagine; by host glycans are attached at residues Asn-117, Asn-182, Asn-261, Asn-269, and Asn-321. Positions 246 to 345 (PSQDHRFKLI…HNYYFDKTLT (100 aa)) constitute an Ig-like V-type domain. A disulfide bond links Cys-272 and Cys-333.

This sequence belongs to the interleukin-1 receptor family. As to quaternary structure, interacts with host IFNA1.

The protein resides in the secreted. Its function is as follows. Counteracts the antiviral effects of host IFN-alpha/beta and key IFN-inducible proteins involved in viral RNA degradation suxh as host OAS1. Acts as a soluble IFN-alpha receptor and thus inhibits the interaction between host IFN-alpha and its receptor. This is Soluble interferon alpha/beta receptor OPG204 (OPG204) from Cynomys gunnisoni (Gunnison's prairie dog).